The following is a 175-amino-acid chain: Catabolic 3-dehydroquinase (175 aa).

Tyrosine 23 acts as the Proton acceptor in catalysis. Substrate-binding residues include asparagine 74, histidine 80, and aspartate 87. Histidine 100 (proton donor) is an active-site residue. Residues 101 to 102 (IS) and arginine 111 each bind substrate.

It belongs to the type-II 3-dehydroquinase family. In terms of assembly, homododecamer. Adopts a ring-like structure, composed of an arrangement of two hexameric rings stacked on top of one another.

It carries out the reaction 3-dehydroquinate = 3-dehydroshikimate + H2O. It functions in the pathway aromatic compound metabolism; 3,4-dihydroxybenzoate biosynthesis; 3,4-dihydroxybenzoate from 3-dehydroquinate: step 1/2. In terms of biological role, is involved in the catabolism of quinate. Allows the utilization of quinate as carbon source via the beta-ketoadipate pathway. This chain is Catabolic 3-dehydroquinase, found in Talaromyces marneffei (strain ATCC 18224 / CBS 334.59 / QM 7333) (Penicillium marneffei).